We begin with the raw amino-acid sequence, 311 residues long: Ribonuclease HIII (311 aa).

Residues 95 to 311 (MSIVGSDEVG…NTEKAFRLLK (217 aa)) enclose the RNase H type-2 domain. A divalent metal cation-binding residues include Asp-101, Glu-102, and Asp-206.

Belongs to the RNase HII family. RnhC subfamily. Requires Mn(2+) as cofactor. Mg(2+) is required as a cofactor.

Its subcellular location is the cytoplasm. The catalysed reaction is Endonucleolytic cleavage to 5'-phosphomonoester.. Its function is as follows. Endonuclease that specifically degrades the RNA of RNA-DNA hybrids. The sequence is that of Ribonuclease HIII from Bacillus anthracis (strain A0248).